Consider the following 226-residue polypeptide: Glutathione peroxidase 3 (226 aa).

An N-terminal signal peptide occupies residues methionine 1–glycine 24. Residue selenocysteine 73 is part of the active site. Position 73 (selenocysteine 73) is a non-standard amino acid, selenocysteine.

The protein belongs to the glutathione peroxidase family. In terms of assembly, homotetramer. Secreted in plasma.

The protein localises to the secreted. The enzyme catalyses 2 glutathione + H2O2 = glutathione disulfide + 2 H2O. It carries out the reaction tert-butyl hydroperoxide + 2 glutathione = tert-butanol + glutathione disulfide + H2O. In terms of biological role, protects cells and enzymes from oxidative damage, by catalyzing the reduction of hydrogen peroxide, lipid peroxides and organic hydroperoxide, by glutathione. This is Glutathione peroxidase 3 from Sapajus apella (Brown-capped capuchin).